The following is a 430-amino-acid chain: Bifunctional protein GlmU (430 aa).

Positions methionine 1–lysine 223 are pyrophosphorylase. Residues leucine 8–glycine 11, lysine 22, and glycine 81–threonine 82 each bind UDP-N-acetyl-alpha-D-glucosamine. Aspartate 102 lines the Mg(2+) pocket. Residues glycine 135, glutamate 149, asparagine 164, and asparagine 221 each contribute to the UDP-N-acetyl-alpha-D-glucosamine site. Asparagine 221 serves as a coordination point for Mg(2+). Residues tyrosine 224–glutamine 244 form a linker region. An N-acetyltransferase region spans residues glycine 245 to asparagine 430. UDP-N-acetyl-alpha-D-glucosamine-binding residues include arginine 308 and lysine 325. Histidine 336 (proton acceptor) is an active-site residue. Tyrosine 339 and asparagine 350 together coordinate UDP-N-acetyl-alpha-D-glucosamine. Acetyl-CoA is bound by residues alanine 353, asparagine 359–tyrosine 360, serine 378, alanine 396, and arginine 413.

It in the N-terminal section; belongs to the N-acetylglucosamine-1-phosphate uridyltransferase family. This sequence in the C-terminal section; belongs to the transferase hexapeptide repeat family. As to quaternary structure, homotrimer. The cofactor is Mg(2+).

The protein resides in the cytoplasm. The catalysed reaction is alpha-D-glucosamine 1-phosphate + acetyl-CoA = N-acetyl-alpha-D-glucosamine 1-phosphate + CoA + H(+). The enzyme catalyses N-acetyl-alpha-D-glucosamine 1-phosphate + UTP + H(+) = UDP-N-acetyl-alpha-D-glucosamine + diphosphate. It functions in the pathway nucleotide-sugar biosynthesis; UDP-N-acetyl-alpha-D-glucosamine biosynthesis; N-acetyl-alpha-D-glucosamine 1-phosphate from alpha-D-glucosamine 6-phosphate (route II): step 2/2. Its pathway is nucleotide-sugar biosynthesis; UDP-N-acetyl-alpha-D-glucosamine biosynthesis; UDP-N-acetyl-alpha-D-glucosamine from N-acetyl-alpha-D-glucosamine 1-phosphate: step 1/1. The protein operates within bacterial outer membrane biogenesis; LPS lipid A biosynthesis. Its function is as follows. Catalyzes the last two sequential reactions in the de novo biosynthetic pathway for UDP-N-acetylglucosamine (UDP-GlcNAc). The C-terminal domain catalyzes the transfer of acetyl group from acetyl coenzyme A to glucosamine-1-phosphate (GlcN-1-P) to produce N-acetylglucosamine-1-phosphate (GlcNAc-1-P), which is converted into UDP-GlcNAc by the transfer of uridine 5-monophosphate (from uridine 5-triphosphate), a reaction catalyzed by the N-terminal domain. This Nitratiruptor sp. (strain SB155-2) protein is Bifunctional protein GlmU.